The primary structure comprises 490 residues: Solute carrier family 2, facilitated glucose transporter member 1 (490 aa).

The Cytoplasmic portion of the chain corresponds to 1–10 (MESGSKMTAR). The helical transmembrane segment at 11–32 (LMLAVGGAVLGSLQFGYNTGVI) threads the bilayer. At 33–65 (NRPQKVIEDFYNHTWLYRYEEPISPATLTTLWS) the chain is on the extracellular side. N-linked (GlcNAc...) asparagine glycosylation is present at N44. The chain crosses the membrane as a helical span at residues 66 to 86 (LSVAIFSVGGMIGSFSVGLFV). Over 87 to 89 (NRF) the chain is Cytoplasmic. Residues 90 to 111 (GRRNSMLMSNILAFLAAVLMGF) traverse the membrane as a helical segment. At 112-119 (SKMALSFE) the chain is on the extracellular side. A helical transmembrane segment spans residues 120-143 (MLILGRFIIGLYSGLTTGFVPMYV). The Cytoplasmic segment spans residues 144–154 (GEVSPTALRGA). Residues 155-175 (LGTFHQLGIVLGILIAQVFGL) traverse the membrane as a helical segment. Position 160 (Q160) interacts with D-glucose. Residues 176 to 184 (DLIMGNDSL) are Extracellular-facing. The helical transmembrane segment at 185 to 205 (WPLLLGFIFVPALLQCIILPF) threads the bilayer. The Cytoplasmic segment spans residues 206–270 (APESPRFLLI…LFRSPMYRQP (65 aa)). Residues 271–292 (ILIAIVLQLSQQLSGINAVFYY) form a helical membrane-spanning segment. D-glucose-binding positions include 281 to 282 (QQ) and N287. Over 293–305 (STSIFEKSGVEQP) the chain is Extracellular. Residues 306–327 (VYATIGSGVVNTAFTVVSLFVV) form a helical membrane-spanning segment. N316 serves as a coordination point for D-glucose. Residues 328 to 333 (ERAGRR) lie on the Cytoplasmic side of the membrane. The helical transmembrane segment at 334-354 (TLHLIGLAGMAGCAILMTIAL) threads the bilayer. Residues 355 to 364 (TLLDQMPWMS) are Extracellular-facing. A helical transmembrane segment spans residues 365-387 (YLSIVAIFGFVAFFEIGPGPIPW). D-glucose is bound by residues E379 and W387. The Cytoplasmic portion of the chain corresponds to 388–400 (FIVAELFSQGPRP). The chain crosses the membrane as a helical span at residues 401–421 (AAFAVAGLSNWTSNFIVGMGF). At 422–428 (QYIAQLC) the chain is on the extracellular side. A helical membrane pass occupies residues 429–449 (GSYVFIIFTVLLVLFFIFTYF). Residues 450 to 490 (KVPETKGRTFDEIAYRFRQGGASQSDKTPDEFHSLGADSQV) lie on the Cytoplasmic side of the membrane. The segment at 470–490 (GASQSDKTPDEFHSLGADSQV) is disordered.

Belongs to the major facilitator superfamily. Sugar transporter (TC 2.A.1.1) family. Glucose transporter subfamily. As to quaternary structure, interacts with isoform 1 of BSG. Retinal cones (at protein level).

It localises to the cell membrane. Its subcellular location is the photoreceptor inner segment. It catalyses the reaction D-glucose(out) = D-glucose(in). Facilitative glucose transporter, which is responsible for constitutive or basal glucose uptake. Has a very broad substrate specificity; can transport a wide range of aldoses including both pentoses and hexoses. Most important energy carrier of the brain: present at the blood-brain barrier and assures the energy-independent, facilitative transport of glucose into the brain. In association with BSG and NXNL1, promotes retinal cone survival by increasing glucose uptake into photoreceptors. Required for mesendoderm differentiation. The polypeptide is Solute carrier family 2, facilitated glucose transporter member 1 (Gallus gallus (Chicken)).